A 159-amino-acid polypeptide reads, in one-letter code: Large ribosomal subunit protein uL10 (159 aa).

Belongs to the universal ribosomal protein uL10 family. Part of the ribosomal stalk of the 50S ribosomal subunit. The N-terminus interacts with L11 and the large rRNA to form the base of the stalk. The C-terminus forms an elongated spine to which L12 dimers bind in a sequential fashion forming a multimeric L10(L12)X complex.

In terms of biological role, forms part of the ribosomal stalk, playing a central role in the interaction of the ribosome with GTP-bound translation factors. In Campylobacter lari (strain RM2100 / D67 / ATCC BAA-1060), this protein is Large ribosomal subunit protein uL10.